Reading from the N-terminus, the 452-residue chain is Bifunctional protein GlmU (452 aa).

The interval 1 to 224 (MNIVILAAGQ…EWEVLGVNSK (224 aa)) is pyrophosphorylase. Residues 6 to 9 (LAAG), lysine 20, glutamine 71, 76 to 77 (GT), 98 to 100 (YGD), glycine 134, glutamate 149, asparagine 164, and asparagine 222 each bind UDP-N-acetyl-alpha-D-glucosamine. Residue aspartate 100 coordinates Mg(2+). Mg(2+) is bound at residue asparagine 222. The linker stretch occupies residues 225 to 245 (VQLAELERQHQLNLAGELLVA). The interval 246–452 (GVRLADPARI…GWERPKKVKK (207 aa)) is N-acetyltransferase. Residues arginine 328 and lysine 346 each contribute to the UDP-N-acetyl-alpha-D-glucosamine site. Histidine 358 acts as the Proton acceptor in catalysis. UDP-N-acetyl-alpha-D-glucosamine is bound by residues tyrosine 361 and asparagine 372. Acetyl-CoA contacts are provided by residues alanine 375, 381 to 382 (NY), serine 400, alanine 418, and arginine 435.

The protein in the N-terminal section; belongs to the N-acetylglucosamine-1-phosphate uridyltransferase family. In the C-terminal section; belongs to the transferase hexapeptide repeat family. As to quaternary structure, homotrimer. Mg(2+) is required as a cofactor.

Its subcellular location is the cytoplasm. It carries out the reaction alpha-D-glucosamine 1-phosphate + acetyl-CoA = N-acetyl-alpha-D-glucosamine 1-phosphate + CoA + H(+). The enzyme catalyses N-acetyl-alpha-D-glucosamine 1-phosphate + UTP + H(+) = UDP-N-acetyl-alpha-D-glucosamine + diphosphate. Its pathway is nucleotide-sugar biosynthesis; UDP-N-acetyl-alpha-D-glucosamine biosynthesis; N-acetyl-alpha-D-glucosamine 1-phosphate from alpha-D-glucosamine 6-phosphate (route II): step 2/2. It functions in the pathway nucleotide-sugar biosynthesis; UDP-N-acetyl-alpha-D-glucosamine biosynthesis; UDP-N-acetyl-alpha-D-glucosamine from N-acetyl-alpha-D-glucosamine 1-phosphate: step 1/1. It participates in bacterial outer membrane biogenesis; LPS lipid A biosynthesis. Its function is as follows. Catalyzes the last two sequential reactions in the de novo biosynthetic pathway for UDP-N-acetylglucosamine (UDP-GlcNAc). The C-terminal domain catalyzes the transfer of acetyl group from acetyl coenzyme A to glucosamine-1-phosphate (GlcN-1-P) to produce N-acetylglucosamine-1-phosphate (GlcNAc-1-P), which is converted into UDP-GlcNAc by the transfer of uridine 5-monophosphate (from uridine 5-triphosphate), a reaction catalyzed by the N-terminal domain. The chain is Bifunctional protein GlmU from Dechloromonas aromatica (strain RCB).